Here is a 542-residue protein sequence, read N- to C-terminus: Chaperonin GroEL (542 aa).

Residues 29 to 32 (TLGP), 86 to 90 (DGTTT), Gly413, and Asp493 contribute to the ATP site.

The protein belongs to the chaperonin (HSP60) family. In terms of assembly, forms a cylinder of 14 subunits composed of two heptameric rings stacked back-to-back. Interacts with the co-chaperonin GroES.

The protein localises to the cytoplasm. It carries out the reaction ATP + H2O + a folded polypeptide = ADP + phosphate + an unfolded polypeptide.. Together with its co-chaperonin GroES, plays an essential role in assisting protein folding. The GroEL-GroES system forms a nano-cage that allows encapsulation of the non-native substrate proteins and provides a physical environment optimized to promote and accelerate protein folding. The sequence is that of Chaperonin GroEL from Elusimicrobium minutum (strain Pei191).